A 150-amino-acid polypeptide reads, in one-letter code: Deoxyuridine 5'-triphosphate nucleotidohydrolase (150 aa).

Substrate-binding positions include 70-72, Asn-83, and 87-89; these read RSG and TID.

Belongs to the dUTPase family. Mg(2+) serves as cofactor.

It carries out the reaction dUTP + H2O = dUMP + diphosphate + H(+). Its pathway is pyrimidine metabolism; dUMP biosynthesis; dUMP from dCTP (dUTP route): step 2/2. In terms of biological role, this enzyme is involved in nucleotide metabolism: it produces dUMP, the immediate precursor of thymidine nucleotides and it decreases the intracellular concentration of dUTP so that uracil cannot be incorporated into DNA. The polypeptide is Deoxyuridine 5'-triphosphate nucleotidohydrolase (Desulfotalea psychrophila (strain LSv54 / DSM 12343)).